The following is a 146-amino-acid chain: Protein E6 (146 aa).

2 zinc fingers span residues 27–63 (CVFC…CAPC) and 100–136 (CHAC…CCQC).

This sequence belongs to the papillomaviridae E6 protein family. As to quaternary structure, forms homodimers. Interacts with ubiquitin-protein ligase UBE3A/E6-AP; this interaction stimulates UBE3A ubiquitin activity. Interacts with host TP53 and EP300; this interaction inhibits TP53 activity.

It is found in the host cytoplasm. The protein localises to the host nucleus. In terms of biological role, plays a major role in the induction and maintenance of cellular transformation. E6 associates with host UBE3A/E6-AP ubiquitin-protein ligase and modulates its activity. Sequesters tumor suppressor TP53 in the host cytoplasm and modulates its activity by interacting with host EP300 that results in the reduction of TP53 acetylation and activation. In turn, apoptosis induced by DNA damage is inhibited. E6 also protects host keratinocytes from apoptosis by mediating the degradation of host BAK1. May also inhibit host immune response. The chain is Protein E6 from Human papillomavirus type 61.